A 548-amino-acid chain; its full sequence is Chaperonin GroEL (548 aa).

ATP-binding positions include 30-33, K51, 87-91, G415, and D495; these read TLGP and DGTTT.

The protein belongs to the chaperonin (HSP60) family. Forms a cylinder of 14 subunits composed of two heptameric rings stacked back-to-back. Interacts with the co-chaperonin GroES.

It is found in the cytoplasm. The enzyme catalyses ATP + H2O + a folded polypeptide = ADP + phosphate + an unfolded polypeptide.. Functionally, together with its co-chaperonin GroES, plays an essential role in assisting protein folding. The GroEL-GroES system forms a nano-cage that allows encapsulation of the non-native substrate proteins and provides a physical environment optimized to promote and accelerate protein folding. The protein is Chaperonin GroEL of Erwinia tasmaniensis (strain DSM 17950 / CFBP 7177 / CIP 109463 / NCPPB 4357 / Et1/99).